Reading from the N-terminus, the 344-residue chain is Uroporphyrinogen decarboxylase (344 aa).

Substrate contacts are provided by residues 29–33, D79, Y153, S208, and H324; that span reads RQAGR.

Belongs to the uroporphyrinogen decarboxylase family. In terms of assembly, homodimer.

Its subcellular location is the cytoplasm. It carries out the reaction uroporphyrinogen III + 4 H(+) = coproporphyrinogen III + 4 CO2. It participates in porphyrin-containing compound metabolism; protoporphyrin-IX biosynthesis; coproporphyrinogen-III from 5-aminolevulinate: step 4/4. Functionally, catalyzes the decarboxylation of four acetate groups of uroporphyrinogen-III to yield coproporphyrinogen-III. This chain is Uroporphyrinogen decarboxylase, found in Rhizorhabdus wittichii (strain DSM 6014 / CCUG 31198 / JCM 15750 / NBRC 105917 / EY 4224 / RW1) (Sphingomonas wittichii).